A 160-amino-acid polypeptide reads, in one-letter code: FMRFamide-like neuropeptides 13 (160 aa).

Positions 1 to 17 are cleaved as a signal peptide; it reads MMTSLLTISMFVVAIQA. Positions 18 to 43 are excised as a propeptide; the sequence is FDSSEIRMLDEQYDTKNPFFQFLENS. F60, F73, F85, F98, F110, F123, F135, F146, and F157 each carry phenylalanine amide.

Belongs to the FARP (FMRFamide related peptide) family. As to expression, expressed in the ASE sensory neurons, the DD motor neurons, the 15, M3 and M5 cholinergic pharyngeal motoneurons, and the ASG, ASK and BAG neurons.

It is found in the secreted. Probable FMRFamide-like neuropeptides. Binds to neuronal receptors such as dmsr-1 to promote sleep in response to cellular stress also known as stress-induced sleep (SIS). Plays a role in behaviors associated with SIS, acting in concert with the FMRFamide related peptide, flp-24 and neuropeptide-like protein nlp-8. Functionally, AADGAPLIRF-amide: Inhibits muscle tension in somatic muscle. Acts as a ligand for the npr-22 receptor in vitro. Acts as a ligand for isoform a of the dmsr-1 G-protein coupled receptor in vitro. In terms of biological role, APEASPFIRF-amide: Inhibits muscle tension in somatic muscle. Potent inhibitor of the activity of the dissected pharyngeal myogenic muscle system. Acts as a ligand for isoform a of the dmsr-1 G-protein coupled receptor in vitro. Its function is as follows. Acts as a ligand for the npr-22 receptor in vitro. Acts as a ligand for isoform a of the dmsr-1 G-protein coupled receptor in vitro. Acts as a ligand for isoform a of the dmsr-1 G-protein coupled receptor in vitro. In Caenorhabditis elegans, this protein is FMRFamide-like neuropeptides 13.